Here is a 407-residue protein sequence, read N- to C-terminus: 1-deoxy-D-xylulose 5-phosphate reductoisomerase (407 aa).

NADPH is bound by residues T25, G26, S27, I28, N53, and N136. A 1-deoxy-D-xylulose 5-phosphate-binding site is contributed by K137. Residue E138 participates in NADPH binding. Residue D162 participates in Mn(2+) binding. 1-deoxy-D-xylulose 5-phosphate is bound by residues S163, E164, S188, and H211. E164 is a Mn(2+) binding site. Residue G217 coordinates NADPH. S224, N229, K230, and E233 together coordinate 1-deoxy-D-xylulose 5-phosphate. Position 233 (E233) interacts with Mn(2+).

It belongs to the DXR family. The cofactor is Mg(2+). Requires Mn(2+) as cofactor.

The enzyme catalyses 2-C-methyl-D-erythritol 4-phosphate + NADP(+) = 1-deoxy-D-xylulose 5-phosphate + NADPH + H(+). It functions in the pathway isoprenoid biosynthesis; isopentenyl diphosphate biosynthesis via DXP pathway; isopentenyl diphosphate from 1-deoxy-D-xylulose 5-phosphate: step 1/6. In terms of biological role, catalyzes the NADPH-dependent rearrangement and reduction of 1-deoxy-D-xylulose-5-phosphate (DXP) to 2-C-methyl-D-erythritol 4-phosphate (MEP). This Rhodopseudomonas palustris (strain BisB18) protein is 1-deoxy-D-xylulose 5-phosphate reductoisomerase.